A 362-amino-acid polypeptide reads, in one-letter code: Molybdenum import ATP-binding protein ModC (362 aa).

Residues 2 to 236 enclose the ABC transporter domain; that stretch reads ASPIEVRLHM…LDLPLAMGGD (235 aa). Residue 34 to 41 coordinates ATP; that stretch reads GPSGSGKT. The Mop domain occupies 297 to 362; the sequence is QSSILNRLPV…AQIKAVAVLA (66 aa).

This sequence belongs to the ABC transporter superfamily. Molybdate importer (TC 3.A.1.8) family. In terms of assembly, the complex is composed of two ATP-binding proteins (ModC), two transmembrane proteins (ModB) and a solute-binding protein (ModA).

It is found in the cell inner membrane. It catalyses the reaction molybdate(out) + ATP + H2O = molybdate(in) + ADP + phosphate + H(+). Functionally, part of the ABC transporter complex ModABC involved in molybdenum import. Responsible for energy coupling to the transport system. This is Molybdenum import ATP-binding protein ModC from Pseudomonas savastanoi pv. phaseolicola (strain 1448A / Race 6) (Pseudomonas syringae pv. phaseolicola (strain 1448A / Race 6)).